The primary structure comprises 197 residues: Large ribosomal subunit protein mL58 (197 aa).

The transit peptide at 1–20 (MLFTIKPSFLKPVGFIQTRN) directs the protein to the mitochondrion.

Belongs to the mitochondrion-specific ribosomal protein mL58 family. Component of the mitochondrial large ribosomal subunit (mt-LSU). Mature yeast 74S mitochondrial ribosomes consist of a small (37S) and a large (54S) subunit. The 37S small subunit contains a 15S ribosomal RNA (15S mt-rRNA) and at least 32 different proteins. The 54S large subunit contains a 21S rRNA (21S mt-rRNA) and at least 45 different proteins.

It localises to the mitochondrion. In terms of biological role, component of the mitochondrial ribosome (mitoribosome), a dedicated translation machinery responsible for the synthesis of mitochondrial genome-encoded proteins, including at least some of the essential transmembrane subunits of the mitochondrial respiratory chain. The mitoribosomes are attached to the mitochondrial inner membrane and translation products are cotranslationally integrated into the membrane. This Schizosaccharomyces pombe (strain 972 / ATCC 24843) (Fission yeast) protein is Large ribosomal subunit protein mL58 (mrpl20).